A 425-amino-acid chain; its full sequence is Dihydroorotase (425 aa).

Zn(2+) is bound by residues H61 and H63. Residues 63-65 (HLR) and N95 contribute to the substrate site. D153, H180, and H233 together coordinate Zn(2+). Position 279 (N279) interacts with substrate. D306 is a Zn(2+) binding site. The active site involves D306. Position 310 (H310) interacts with substrate.

Belongs to the metallo-dependent hydrolases superfamily. DHOase family. Class I DHOase subfamily. Requires Zn(2+) as cofactor.

It carries out the reaction (S)-dihydroorotate + H2O = N-carbamoyl-L-aspartate + H(+). It functions in the pathway pyrimidine metabolism; UMP biosynthesis via de novo pathway; (S)-dihydroorotate from bicarbonate: step 3/3. Functionally, catalyzes the reversible cyclization of carbamoyl aspartate to dihydroorotate. The chain is Dihydroorotase from Trichlorobacter lovleyi (strain ATCC BAA-1151 / DSM 17278 / SZ) (Geobacter lovleyi).